A 365-amino-acid polypeptide reads, in one-letter code: UDP-N-acetylglucosamine--N-acetylmuramyl-(pentapeptide) pyrophosphoryl-undecaprenol N-acetylglucosamine transferase (365 aa).

UDP-N-acetyl-alpha-D-glucosamine is bound by residues 19–21, Asn-131, Arg-170, Ser-201, Ile-255, 274–279, and Gln-300; these read TGG and ALTVTE.

It belongs to the glycosyltransferase 28 family. MurG subfamily.

The protein resides in the cell inner membrane. The enzyme catalyses di-trans,octa-cis-undecaprenyl diphospho-N-acetyl-alpha-D-muramoyl-L-alanyl-D-glutamyl-meso-2,6-diaminopimeloyl-D-alanyl-D-alanine + UDP-N-acetyl-alpha-D-glucosamine = di-trans,octa-cis-undecaprenyl diphospho-[N-acetyl-alpha-D-glucosaminyl-(1-&gt;4)]-N-acetyl-alpha-D-muramoyl-L-alanyl-D-glutamyl-meso-2,6-diaminopimeloyl-D-alanyl-D-alanine + UDP + H(+). It functions in the pathway cell wall biogenesis; peptidoglycan biosynthesis. Functionally, cell wall formation. Catalyzes the transfer of a GlcNAc subunit on undecaprenyl-pyrophosphoryl-MurNAc-pentapeptide (lipid intermediate I) to form undecaprenyl-pyrophosphoryl-MurNAc-(pentapeptide)GlcNAc (lipid intermediate II). This is UDP-N-acetylglucosamine--N-acetylmuramyl-(pentapeptide) pyrophosphoryl-undecaprenol N-acetylglucosamine transferase from Acinetobacter baumannii (strain ATCC 17978 / DSM 105126 / CIP 53.77 / LMG 1025 / NCDC KC755 / 5377).